The chain runs to 143 residues: Nucleoside diphosphate kinase (143 aa).

In terms of domain architecture, NDPK-like spans 1 to 132 (MVKPDGVQRG…LWFSPQELCQ (132 aa)). The ADP site is built by Lys3, Phe51, Arg79, Thr85, Arg96, Val103, and Asn106. The ATP site is built by Lys3, Phe51, Arg79, Thr85, and Arg96. Asn106 lines the ATP pocket. His109 serves as the catalytic Pros-phosphohistidine intermediate.

This sequence belongs to the NDK family. In terms of assembly, homohexamer. The cofactor is Mg(2+).

The catalysed reaction is a 2'-deoxyribonucleoside 5'-diphosphate + ATP = a 2'-deoxyribonucleoside 5'-triphosphate + ADP. The enzyme catalyses a ribonucleoside 5'-diphosphate + ATP = a ribonucleoside 5'-triphosphate + ADP. It catalyses the reaction GDP + ATP = GTP + ADP. It functions in the pathway purine metabolism; purine nucleotide biosynthesis. Its function is as follows. Major role in the synthesis of nucleoside triphosphates other than ATP. The ATP gamma phosphate is transferred to the NDP beta phosphate via a ping-pong mechanism, using a phosphorylated active-site intermediate. This Schistosoma mansoni (Blood fluke) protein is Nucleoside diphosphate kinase.